Here is a 287-residue protein sequence, read N- to C-terminus: tRNA (guanine(9)-N1)-methyltransferase (287 aa).

Residues 1–27 (MSDTSDLVDGKWQRLPPVPEGMSKSQW) form a disordered region. Residues 79–272 (EPRVNRDQVA…SVIPSRKLDP (194 aa)) enclose the SAM-dependent MTase TRM10-type domain. S-adenosyl-L-methionine is bound by residues 179 to 180 (LT), G199, 203 to 207 (DKNRH), C211, L225, and 237 to 239 (KVL). The active-site Proton acceptor is the D203. A compositionally biased stretch (basic and acidic residues) spans 268–278 (RKLDPVKEKEQ). A disordered region spans residues 268 to 287 (RKLDPVKEKEQQQQQQQQQQ).

The protein belongs to the class IV-like SAM-binding methyltransferase superfamily. TRM10 family. In terms of assembly, monomer.

Its subcellular location is the cytoplasm. The protein resides in the nucleus. It carries out the reaction guanosine(9) in tRNA + S-adenosyl-L-methionine = N(1)-methylguanosine(9) in tRNA + S-adenosyl-L-homocysteine + H(+). Its function is as follows. S-adenosyl-L-methionine-dependent guanine N(1)-methyltransferase that catalyzes the formation of N(1)-methylguanine at position 9 (m1G9) in cytoplasmic tRNA. This Candida glabrata (strain ATCC 2001 / BCRC 20586 / JCM 3761 / NBRC 0622 / NRRL Y-65 / CBS 138) (Yeast) protein is tRNA (guanine(9)-N1)-methyltransferase.